The following is a 129-amino-acid chain: Flagellar assembly factor FliW 2 (129 aa).

It belongs to the FliW family. As to quaternary structure, interacts with translational regulator CsrA and flagellin(s).

It localises to the cytoplasm. Functionally, acts as an anti-CsrA protein, binds CsrA and prevents it from repressing translation of its target genes, one of which is flagellin. Binds to flagellin and participates in the assembly of the flagellum. This is Flagellar assembly factor FliW 2 from Helicobacter pylori (strain J99 / ATCC 700824) (Campylobacter pylori J99).